The chain runs to 69 residues: Small ribosomal subunit protein bS21 (69 aa).

The segment at 50-69 (KAFKRKQAKKVRKLKQKTNR) is disordered.

The protein belongs to the bacterial ribosomal protein bS21 family.

The chain is Small ribosomal subunit protein bS21 from Borrelia garinii subsp. bavariensis (strain ATCC BAA-2496 / DSM 23469 / PBi) (Borreliella bavariensis).